The following is a 245-amino-acid chain: tRNA1(Val) (adenine(37)-N6)-methyltransferase (245 aa).

This sequence belongs to the methyltransferase superfamily. tRNA (adenine-N(6)-)-methyltransferase family.

The protein localises to the cytoplasm. It carries out the reaction adenosine(37) in tRNA1(Val) + S-adenosyl-L-methionine = N(6)-methyladenosine(37) in tRNA1(Val) + S-adenosyl-L-homocysteine + H(+). In terms of biological role, specifically methylates the adenine in position 37 of tRNA(1)(Val) (anticodon cmo5UAC). The chain is tRNA1(Val) (adenine(37)-N6)-methyltransferase from Shigella boydii serotype 18 (strain CDC 3083-94 / BS512).